Consider the following 723-residue polypeptide: DNA-binding protein RFX2 (723 aa).

The segment at 1 to 46 is disordered; the sequence is MQNSEGGADSPASVALRPSAAAPPVPASPQRVLVQAASSAPKGAQM. Positions 10–20 are enriched in low complexity; the sequence is SPASVALRPSA. Ser-28 carries the phosphoserine modification. A DNA-binding region (RFX-type winged-helix) is located at residues 199–274; sequence HLQWLLDNYE…YHYYGIRLKP (76 aa). A disordered region spans residues 292–332; sequence QQPMHQKPRYRPAQKTDSLGDSGSHSSLHSTPEQTMAAQSQ. Low complexity predominate over residues 307-322; it reads TDSLGDSGSHSSLHST. The span at 323 to 332 shows a compositional bias: polar residues; it reads PEQTMAAQSQ. Ser-416 is modified (phosphoserine). The disordered stretch occupies residues 689-723; the sequence is GDERRGSEAGPDAHSLGEPLVKRERSDPNHSLQGI.

Belongs to the RFX family. As to quaternary structure, homodimer; probably only forms homodimers in testis. Heterodimer; heterodimerizes with RFX1 and RFX3.

It is found in the nucleus. It localises to the cytoplasm. Transcription factor that acts as a key regulator of spermatogenesis. Acts by regulating expression of genes required for the haploid phase during spermiogenesis, such as genes required for cilium assembly and function. Recognizes and binds the X-box, a regulatory motif with DNA sequence 5'-GTNRCC(0-3N)RGYAAC-3' present on promoters. Probably activates transcription of the testis-specific histone gene H1-6. The protein is DNA-binding protein RFX2 (RFX2) of Macaca fascicularis (Crab-eating macaque).